Reading from the N-terminus, the 1090-residue chain is UPF0507 protein C1Q_01007 (1090 aa).

The region spanning phenylalanine 289–asparagine 436 is the VPS9 domain.

Belongs to the UPF0507 family.

The protein is UPF0507 protein C1Q_01007 of Saccharomyces cerevisiae (strain JAY291) (Baker's yeast).